The chain runs to 644 residues: Fidgetin-like protein 2 (644 aa).

Disordered stretches follow at residues 1-36 and 285-323; these read MHWT…ELPP and AADG…GGGG. Polar residues predominate over residues 10–27; that stretch reads PLNQWPEQHLDVSSTTPS. The span at 285 to 294 shows a compositional bias: low complexity; the sequence is AADGASYPAA. ATP contacts are provided by residues alanine 390 and 430 to 435; that span reads GCGKAL.

It belongs to the AAA ATPase family. Mg(2+) serves as cofactor.

It localises to the cytoplasm. It is found in the cell cortex. The enzyme catalyses ATP + H2O = ADP + phosphate + H(+). In terms of biological role, microtubule-severing enzyme that negatively regulates cell migration and wound healing. In migrating cells, targets dynamic microtubules (MTs) at the leading edge and severs them, thereby suppressing motility. Microtubule severing releases ARHGEF2 which activates RHOA, which in turn regulates focal ahesion turnover via focal adhesion kinase, as opposed to F-actin polymerization, to suppress cell motility. Negative regulator of axon regeneration that suppresses axonal growth by selectively severing dynamic MTs in the distal axon shaft and growth cone. Contributes to proper cell branching during endothelial and neuronal development. This Mus musculus (Mouse) protein is Fidgetin-like protein 2 (Fignl2).